The chain runs to 106 residues: Iron-sulfur cluster assembly protein CyaY (106 aa).

This sequence belongs to the frataxin family.

Involved in iron-sulfur (Fe-S) cluster assembly. May act as a regulator of Fe-S biogenesis. The sequence is that of Iron-sulfur cluster assembly protein CyaY from Salmonella newport (strain SL254).